The following is a 65-amino-acid chain: Alpha-toxin Bs-Tx28 (65 aa).

Positions 3-65 (RDAYIADDKN…VPIRIPGKCR (63 aa)) constitute an LCN-type CS-alpha/beta domain. 4 disulfide bridges follow: Cys-13–Cys-64, Cys-17–Cys-37, Cys-23–Cys-47, and Cys-27–Cys-49. Arg-65 is modified (arginine amide).

It belongs to the long (4 C-C) scorpion toxin superfamily. Sodium channel inhibitor family. Alpha subfamily. As to expression, expressed by the venom gland.

It is found in the secreted. In terms of biological role, alpha toxins bind voltage-independently at site-3 of sodium channels (Nav) and inhibit the inactivation of the activated channels, thereby blocking neuronal transmission. This toxin inhibits the inactivation of activated TTX-sensitive sodium channels (Nav). The chain is Alpha-toxin Bs-Tx28 from Hottentotta tamulus sindicus (Scorpion).